A 525-amino-acid chain; its full sequence is Lymphocyte activation gene 3 protein (525 aa).

Residues 1–23 (MRQDLFLDLLLLQLLWEAPVVSS) form the signal peptide. Topologically, residues 24 to 442 (GPGKELSVVW…ISGDLKGGHL (419 aa)) are extracellular. The Ig-like V-type domain occupies 37-163 (GAPVHLPCSL…FSCSLRLRVG (127 aa)). The segment at 37 to 246 (GAPVHLPCSL…LTYRDGFNVS (210 aa)) is interaction with FGL1. Cys44 and Cys156 form a disulfide bridge. Ig-like C2-type domains lie at 164–246 (QASM…FNVS), 258–341 (PVAP…AAVT), and 345–412 (ITVT…EGQK). N-linked (GlcNAc...) asparagine glycosylation occurs at Asn184. Cysteines 185 and 235 form a disulfide. 2 N-linked (GlcNAc...) asparagine glycosylation sites follow: Asn244 and Asn309. 2 disulfide bridges follow: Cys276–Cys327 and Cys363–Cys405. The interval 422 to 442 (ESSSGAWSAKRISGDLKGGHL) is connecting peptide. The chain crosses the membrane as a helical span at residues 443–463 (FLSLILGALALFLLVTGAFGF). The Cytoplasmic segment spans residues 464–525 (HLWRRQLLRR…PELEPESRQL (62 aa)). A disordered region spans residues 486–525 (PVQSKIEELEREPETEMEPETEPDPEPQPEPELEPESRQL). The short motif at 490–495 (KIEELE) is the KIEELE motif element. Positions 490 to 499 (KIEELEREPE) are enriched in basic and acidic residues. The interval 493–522 (ELEREPETEMEPETEPDPEPQPEPELEPES) is 15 X 2 AA tandem repeats of E-X. Over residues 500–519 (TEMEPETEPDPEPQPEPELE) the composition is skewed to acidic residues.

It belongs to the LAG3 family. Interacts with MHC class II (MHC-II); selectively recognizes stable complexes of peptide and MHC-II. Interacts with FGL1 (via the Fibrinogen C-terminal domain). Post-translationally, proteolytically cleaved by ADAM10 and ADAM17 within the connecting peptide region, leading to release of Secreted lymphocyte activation gene 3 protein (sLAG-3). ADAM10 mediates constitutive cleavage, but cleavage increases following T-cell activation, whereas shedding by ADAM17 is induced by TCR signaling in a PRKCQ-dependent manner.

The protein localises to the cell membrane. It localises to the secreted. In terms of biological role, lymphocyte activation gene 3 protein: Inhibitory receptor on antigen activated T-cells. Delivers inhibitory signals upon binding to ligands, such as FGL1. FGL1 constitutes a major ligand of LAG3 and is responsible for LAG3 T-cell inhibitory function. Following TCR engagement, LAG3 associates with CD3-TCR in the immunological synapse and directly inhibits T-cell activation. May inhibit antigen-specific T-cell activation in synergy with PDCD1/PD-1, possibly by acting as a coreceptor for PDCD1/PD-1. Negatively regulates the proliferation, activation, effector function and homeostasis of both CD8(+) and CD4(+) T-cells. Also mediates immune tolerance: constitutively expressed on a subset of regulatory T-cells (Tregs) and contributes to their suppressive function. Also acts as a negative regulator of plasmacytoid dendritic cell (pDCs) activation. Binds MHC class II (MHC-II); the precise role of MHC-II-binding is however unclear. May function as a ligand for MHC class II (MHC-II) on antigen-presenting cells (APC), promoting APC activation/maturation and driving Th1 immune response. This chain is Lymphocyte activation gene 3 protein (Lag3), found in Rattus norvegicus (Rat).